A 164-amino-acid polypeptide reads, in one-letter code: FMN reductase (NADH) RutF (164 aa).

Belongs to the non-flavoprotein flavin reductase family. RutF subfamily.

It carries out the reaction FMNH2 + NAD(+) = FMN + NADH + 2 H(+). Functionally, catalyzes the reduction of FMN to FMNH2 which is used to reduce pyrimidine by RutA via the Rut pathway. This chain is FMN reductase (NADH) RutF, found in Enterobacter cloacae subsp. cloacae (strain ATCC 13047 / DSM 30054 / NBRC 13535 / NCTC 10005 / WDCM 00083 / NCDC 279-56).